Here is a 354-residue protein sequence, read N- to C-terminus: Tetraacyldisaccharide 4'-kinase (354 aa).

53–60 is a binding site for ATP; it reads AWGGTGKT.

This sequence belongs to the LpxK family.

It carries out the reaction a lipid A disaccharide + ATP = a lipid IVA + ADP + H(+). The protein operates within glycolipid biosynthesis; lipid IV(A) biosynthesis; lipid IV(A) from (3R)-3-hydroxytetradecanoyl-[acyl-carrier-protein] and UDP-N-acetyl-alpha-D-glucosamine: step 6/6. Functionally, transfers the gamma-phosphate of ATP to the 4'-position of a tetraacyldisaccharide 1-phosphate intermediate (termed DS-1-P) to form tetraacyldisaccharide 1,4'-bis-phosphate (lipid IVA). This is Tetraacyldisaccharide 4'-kinase from Nitratidesulfovibrio vulgaris (strain ATCC 29579 / DSM 644 / CCUG 34227 / NCIMB 8303 / VKM B-1760 / Hildenborough) (Desulfovibrio vulgaris).